The chain runs to 385 residues: Putative glutamate--cysteine ligase 2 (385 aa).

It belongs to the glutamate--cysteine ligase type 2 family. YbdK subfamily.

The enzyme catalyses L-cysteine + L-glutamate + ATP = gamma-L-glutamyl-L-cysteine + ADP + phosphate + H(+). In terms of biological role, ATP-dependent carboxylate-amine ligase which exhibits weak glutamate--cysteine ligase activity. This is Putative glutamate--cysteine ligase 2 from Herpetosiphon aurantiacus (strain ATCC 23779 / DSM 785 / 114-95).